We begin with the raw amino-acid sequence, 226 residues long: Ornithine decarboxylase antizyme (226 aa).

The protein belongs to the ODC antizyme family. Interacts with ODC and thereby sterically blocks ODC homodimerization.

In terms of biological role, ornithine decarboxylase (ODC) antizyme protein that negatively regulates ODC activity and intracellular polyamine biosynthesis in response to increased intracellular polyamine levels. Binds to ODC monomers, inhibiting the assembly of the functional ODC homodimer, and targets the monomers for ubiquitin-independent proteolytic destruction by the 26S proteasome. This chain is Ornithine decarboxylase antizyme (spa1), found in Schizosaccharomyces japonicus (Fission yeast).